Here is a 376-residue protein sequence, read N- to C-terminus: DNA replication and repair protein RecF (376 aa).

30–37 (GHNGVGKT) provides a ligand contact to ATP.

It belongs to the RecF family.

It localises to the cytoplasm. Its function is as follows. The RecF protein is involved in DNA metabolism; it is required for DNA replication and normal SOS inducibility. RecF binds preferentially to single-stranded, linear DNA. It also seems to bind ATP. The protein is DNA replication and repair protein RecF of Salinispora arenicola (strain CNS-205).